A 261-amino-acid polypeptide reads, in one-letter code: Proteasome subunit alpha (261 aa).

The disordered stretch occupies residues 242–261 (NEENKKEEENREETKEKQEE).

It belongs to the peptidase T1A family. As to quaternary structure, the 20S proteasome core is composed of 14 alpha and 14 beta subunits that assemble into four stacked heptameric rings, resulting in a barrel-shaped structure. The two inner rings, each composed of seven catalytic beta subunits, are sandwiched by two outer rings, each composed of seven alpha subunits. The catalytic chamber with the active sites is on the inside of the barrel. Has a gated structure, the ends of the cylinder being occluded by the N-termini of the alpha-subunits. Is capped at one or both ends by the proteasome regulatory ATPase, PAN.

Its subcellular location is the cytoplasm. The formation of the proteasomal ATPase PAN-20S proteasome complex, via the docking of the C-termini of PAN into the intersubunit pockets in the alpha-rings, triggers opening of the gate for substrate entry. Interconversion between the open-gate and close-gate conformations leads to a dynamic regulation of the 20S proteasome proteolysis activity. In terms of biological role, component of the proteasome core, a large protease complex with broad specificity involved in protein degradation. The M.jannaschii proteasome is able to cleave oligopeptides after Glu, Asp, Tyr, Phe, Trp, slightly after Arg, but not after Ala. Thus, displays caspase-like and chymotrypsin-like activities and low level of trypsin-like activity. The chain is Proteasome subunit alpha from Methanocaldococcus jannaschii (strain ATCC 43067 / DSM 2661 / JAL-1 / JCM 10045 / NBRC 100440) (Methanococcus jannaschii).